The following is a 297-amino-acid chain: N-acetylmuramic acid 6-phosphate etherase (297 aa).

The SIS domain maps to 55-218 (AAAALKAGGR…STGAMVKLGK (164 aa)). E83 (proton donor) is an active-site residue. E114 is an active-site residue.

It belongs to the GCKR-like family. MurNAc-6-P etherase subfamily. Homodimer.

The catalysed reaction is N-acetyl-D-muramate 6-phosphate + H2O = N-acetyl-D-glucosamine 6-phosphate + (R)-lactate. The protein operates within amino-sugar metabolism; 1,6-anhydro-N-acetylmuramate degradation. It participates in amino-sugar metabolism; N-acetylmuramate degradation. It functions in the pathway cell wall biogenesis; peptidoglycan recycling. Functionally, specifically catalyzes the cleavage of the D-lactyl ether substituent of MurNAc 6-phosphate, producing GlcNAc 6-phosphate and D-lactate. Together with AnmK, is also required for the utilization of anhydro-N-acetylmuramic acid (anhMurNAc) either imported from the medium or derived from its own cell wall murein, and thus plays a role in cell wall recycling. The chain is N-acetylmuramic acid 6-phosphate etherase from Serratia proteamaculans (strain 568).